A 759-amino-acid chain; its full sequence is MKKKIESYQGAAGGWGAVKSVANAVRKQMDIRQDVIAMFDMNKPEGFDCPGCAWPDPKHSASFDICENGAKAIAWEVTDKQVNASFFAENTVQSLLTWGDHELEAAGRLTQPLKYDAVSDCYKPLSWQQAFDEIGARLQSYSDPNQVEFYTSGRTSNEAAFLYQLFAREYGSNNFPDCSNMCHEPTSVGLAASIGVGKGTVLLEDFEKCDLVICIGHNPGTNHPRMLTSLRALVKRGAKMIAINPLQERGLERFTAPQNPFEMLTNSETQLASAYYNVRIGGDMALLKGMMRLLIERDDAASAAGRPSLLDDEFIQTHTVGFDELRRDVLNSEWKDIERISGLSQTQIAELADAYAAAERTIICYGMGITQHEHGTQNVQQLVNLLLMKGNIGKPGAGICPLRGHSNVQGDRTVGITEKPSAEFLARLGERYGFTPPHAPGHAAIASMQAICTGQARALICMGGNFALAMPDREASAVPLTQLDLAVHVATKLNRSHLLTARHSYILPVLGRSEIDMQKNGAQAVTVEDSMSMIHASRGVLKPAGVMLKSECAVVAGIAQAALPQSVVAWEYLVEDYDRIRNDIEAVLPEFADYNQRIRHPGGFHLINAAAERRWMTPSGKANFITSKGLLEDPSSAFNSKLVMATVRSHDQYNTTIYGMDDRYRGVFGQRDVVFMSAKQAKICRVKNGERVNLIALTPDGKRSSRRMDRLKVVIYPMADRSLVTYFPESNHMLTLDNHDPLSGIPGYKSIPVELEPSN.

The [4Fe-4S] cluster site is built by Cys49 and Cys52.

This sequence belongs to the prokaryotic molybdopterin-containing oxidoreductase family. The cofactor is [4Fe-4S] cluster. Mo-bis(molybdopterin guanine dinucleotide) serves as cofactor.

Functionally, probably involved in acid resistance. This chain is Protein YdeP (ydeP), found in Escherichia coli (strain K12).